We begin with the raw amino-acid sequence, 136 residues long: Small ribosomal subunit protein uS9 (136 aa).

Belongs to the universal ribosomal protein uS9 family.

This chain is Small ribosomal subunit protein uS9, found in Borreliella afzelii (strain PKo) (Borrelia afzelii).